The primary structure comprises 1013 residues: Mediator of RNA polymerase II transcription subunit 5 (1013 aa).

The protein belongs to the Mediator complex subunit 5 family. In terms of assembly, component of the Mediator complex.

It is found in the nucleus. In terms of biological role, component of the Mediator complex, a coactivator involved in the regulated transcription of nearly all RNA polymerase II-dependent genes. Mediator functions as a bridge to convey information from gene-specific regulatory proteins to the basal RNA polymerase II transcription machinery. Mediator is recruited to promoters by direct interactions with regulatory proteins and serves as a scaffold for the assembly of a functional preinitiation complex with RNA polymerase II and the general transcription factors. The chain is Mediator of RNA polymerase II transcription subunit 5 (NUT1) from Aspergillus oryzae (strain ATCC 42149 / RIB 40) (Yellow koji mold).